Here is a 432-residue protein sequence, read N- to C-terminus: 3-phosphoshikimate 1-carboxyvinyltransferase (432 aa).

3 residues coordinate 3-phosphoshikimate: K23, S24, and R28. K23 is a phosphoenolpyruvate binding site. The phosphoenolpyruvate site is built by G95 and R123. 4 residues coordinate 3-phosphoshikimate: S167, Q169, D317, and K344. Q169 serves as a coordination point for phosphoenolpyruvate. D317 serves as the catalytic Proton acceptor. Positions 348 and 390 each coordinate phosphoenolpyruvate.

It belongs to the EPSP synthase family. Monomer.

The protein localises to the cytoplasm. It catalyses the reaction 3-phosphoshikimate + phosphoenolpyruvate = 5-O-(1-carboxyvinyl)-3-phosphoshikimate + phosphate. It participates in metabolic intermediate biosynthesis; chorismate biosynthesis; chorismate from D-erythrose 4-phosphate and phosphoenolpyruvate: step 6/7. Catalyzes the transfer of the enolpyruvyl moiety of phosphoenolpyruvate (PEP) to the 5-hydroxyl of shikimate-3-phosphate (S3P) to produce enolpyruvyl shikimate-3-phosphate and inorganic phosphate. This Staphylococcus haemolyticus (strain JCSC1435) protein is 3-phosphoshikimate 1-carboxyvinyltransferase.